Consider the following 78-residue polypeptide: Alpha-neurotoxin homolog 1 (78 aa).

Positions 1–21 (MKTLLLTLVVVTIVCLDFGYT) are cleaved as a signal peptide. Disulfide bonds link cysteine 24/cysteine 42, cysteine 37/cysteine 57, cysteine 59/cysteine 70, and cysteine 71/cysteine 76.

The protein belongs to the three-finger toxin family. Short-chain subfamily. Orphan group XII sub-subfamily. As to expression, expressed by the venom gland.

It localises to the secreted. The polypeptide is Alpha-neurotoxin homolog 1 (Micrurus corallinus (Brazilian coral snake)).